Here is a 1133-residue protein sequence, read N- to C-terminus: Guanine nucleotide-binding protein G(s) subunit alpha isoforms XLas (1133 aa).

Disordered stretches follow at residues Met-1–Leu-195, Asp-322–Ala-552, Ser-611–Lys-648, and Arg-724–Met-744. Residues Leu-31 to Glu-48 show a composition bias toward low complexity. Basic and acidic residues predominate over residues Asp-347–Ala-362. Low complexity-rich tracts occupy residues Pro-391 to Ala-404, Gly-459 to Glu-471, Ala-482 to Ser-498, Ala-515 to Ala-525, and Arg-535 to Ala-552. The span at Pro-633–Thr-643 shows a compositional bias: pro residues. Basic and acidic residues predominate over residues Lys-732–Met-744. The stretch at Met-737–Arg-761 forms a coiled coil. Residues Cys-778–Leu-1133 form the G-alpha domain. The segment at Arg-781–Thr-794 is G1 motif. Gly-786–Thr-794 is a binding site for GTP. Position 793 (Ser-793) interacts with Mg(2+). Residues Phe-807–Ala-828 form a disordered region. The tract at residues Asp-935–Thr-943 is G2 motif. GTP-binding positions include Leu-936 to Thr-943, Asp-962 to Gln-966, and Asn-1031 to Asp-1034. At Arg-940 the chain carries ADP-ribosylarginine; by cholera toxin. Thr-943 contributes to the Mg(2+) binding site. Residues Phe-958–Arg-967 form a G3 motif region. The interval Ile-1027–Asp-1034 is G4 motif. At Ser-1091 the chain carries Phosphoserine. A G5 motif region spans residues Thr-1103–Thr-1108. Ala-1105 contributes to the GTP binding site.

This sequence belongs to the G-alpha family. G(s) subfamily. As to quaternary structure, g proteins are composed of 3 units; alpha, beta and gamma. The alpha chain contains the guanine nucleotide binding site. Interacts through its N-terminal region with ALEX which is produced from the same locus in a different open reading frame. This interaction may inhibit its adenylyl cyclase-stimulating activity. Interacts with MAGED2.

Its subcellular location is the cell membrane. The protein localises to the apical cell membrane. It catalyses the reaction GTP + H2O = GDP + phosphate + H(+). In terms of biological role, guanine nucleotide-binding proteins (G proteins) function as transducers in numerous signaling pathways controlled by G protein-coupled receptors (GPCRs). The alpha chain contains the guanine nucleotide binding site and alternates between an active, GTP-bound state and an inactive, GDP-bound state. Signaling by an activated GPCR promotes GDP release and GTP binding. The alpha subunit has a low GTPase activity that converts bound GTP to GDP, thereby terminating the signal. Both GDP release and GTP hydrolysis are modulated by numerous regulatory proteins. Signaling involves the activation of adenylyl cyclases, resulting in increased levels of the signaling molecule cAMP. GNAS functions downstream of several GPCRs, including beta-adrenergic receptors. XLas isoforms interact with the same set of receptors as Gnas isoforms. This Mus musculus (Mouse) protein is Guanine nucleotide-binding protein G(s) subunit alpha isoforms XLas.